The primary structure comprises 223 residues: Small ribosomal subunit protein uS3 (223 aa).

Residues 38-106 (IREFIAKQLT…RVHINIVEIK (69 aa)) form the KH type-2 domain.

This sequence belongs to the universal ribosomal protein uS3 family. As to quaternary structure, part of the 30S ribosomal subunit. Forms a tight complex with proteins S10 and S14.

In terms of biological role, binds the lower part of the 30S subunit head. Binds mRNA in the 70S ribosome, positioning it for translation. The protein is Small ribosomal subunit protein uS3 of Pediococcus pentosaceus (strain ATCC 25745 / CCUG 21536 / LMG 10740 / 183-1w).